A 270-amino-acid polypeptide reads, in one-letter code: Gene 1 protein (270 aa).

A disordered region spans residues 225–249; sequence WAEEDPPVAAVPLEPEDATAPGKEP.

The sequence is that of Gene 1 protein (1) from Mycobacterium (Mycobacteriophage D29).